A 118-amino-acid chain; its full sequence is Putative pterin-4-alpha-carbinolamine dehydratase (118 aa).

Belongs to the pterin-4-alpha-carbinolamine dehydratase family.

The catalysed reaction is (4aS,6R)-4a-hydroxy-L-erythro-5,6,7,8-tetrahydrobiopterin = (6R)-L-erythro-6,7-dihydrobiopterin + H2O. This chain is Putative pterin-4-alpha-carbinolamine dehydratase, found in Pseudomonas savastanoi pv. phaseolicola (strain 1448A / Race 6) (Pseudomonas syringae pv. phaseolicola (strain 1448A / Race 6)).